Reading from the N-terminus, the 500-residue chain is E3 ubiquitin-protein ligase TRIM69 (500 aa).

Residues 1–22 are disordered; sequence MEVSSRPPSNFDPGNYVEMSDP. Residues 1-153 form a necessary for nuclear localization region; it reads MEVSSRPPSN…SMGQSKDFLQ (153 aa). Residues 42–83 form an RING-type zinc finger; it reads CPLCNDWFRDPLMLTCGHNFCQDCIQSFWKVHSKETFCPDCK. A coiled-coil region spans residues 217–256; sequence NKEKDILNDLRDEGKLLNEEMEVNLNQIQEQCLVAKDMLA. The B30.2/SPRY domain maps to 306–500; sequence PIQYIIWKEM…KEPLHIVHPQ (195 aa). Serine 342 bears the Phosphoserine mark.

This sequence belongs to the TRIM/RBCC family. Homo-multimer; required for antiviral activity. Interacts with PML. Post-translationally, phosphorylated. Phosphorylation is necessary for nuclear localization. Expressed in spermatid.

The protein localises to the cytoplasm. Its subcellular location is the nucleus. It is found in the nucleus speckle. It localises to the cytoskeleton. The protein resides in the microtubule organizing center. The protein localises to the centrosome. The enzyme catalyses S-ubiquitinyl-[E2 ubiquitin-conjugating enzyme]-L-cysteine + [acceptor protein]-L-lysine = [E2 ubiquitin-conjugating enzyme]-L-cysteine + N(6)-ubiquitinyl-[acceptor protein]-L-lysine.. Its pathway is protein modification; protein ubiquitination. E3 ubiquitin ligase that plays an important role in antiviral immunity by restricting different viral infections including dengue virus or vesicular stomatitis indiana virus. Ubiquitinates viral proteins such as dengue virus NS3 thereby limiting infection. In addition, acts as a key mediator of type I interferon induced microtubule stabilization by directly associating to microtubules independently of its E3 ligase activity. Also plays a role in cataract formation together with TP53. Mechanistically, inhibits UVB-induced cell apoptosis and reactive oxygen species (ROS) production by inducing TP53 ubiquitination. Regulates centrosome dynamics and mitotic progression by ubiquitinating STK3/MST2; leading to its redistribution to the perinuclear cytoskeleton and subsequent phosphorylation by PLK1. The chain is E3 ubiquitin-protein ligase TRIM69 (Trim69) from Mus musculus (Mouse).